Here is a 512-residue protein sequence, read N- to C-terminus: Hyaluronidase PH-20 (512 aa).

Positions 1 to 35 (MGELRFKHLFWGSFVESGGTFQTVLIFLLIPCSLT) are cleaved as a signal peptide. A glycan (N-linked (GlcNAc...) asparagine) is linked at Asn-46. 2 disulfide bridges follow: Cys-60–Cys-351 and Cys-223–Cys-237. The active-site Proton donor is the Glu-147. Asn-165 is a glycosylation site (N-linked (GlcNAc...) asparagine). N-linked (GlcNAc...) asparagine glycans are attached at residues Asn-293 and Asn-368. Intrachain disulfides connect Cys-376/Cys-387, Cys-381/Cys-435, and Cys-437/Cys-464.

Belongs to the glycosyl hydrolase 56 family.

It is found in the cell membrane. The catalysed reaction is Random hydrolysis of (1-&gt;4)-linkages between N-acetyl-beta-D-glucosamine and D-glucuronate residues in hyaluronate.. Its function is as follows. Involved in sperm-egg adhesion. Upon fertilization sperm must first penetrate a layer of cumulus cells that surrounds the egg before reaching the zona pellucida. The cumulus cells are embedded in a matrix containing hyaluronic acid which is formed prior to ovulation. This protein aids in penetrating the layer of cumulus cells by digesting hyaluronic acid. This chain is Hyaluronidase PH-20 (Spam1), found in Mus musculus (Mouse).